The primary structure comprises 305 residues: Oxygen-dependent coproporphyrinogen-III oxidase (305 aa).

S97 contributes to the substrate binding site. Residues H101 and H111 each contribute to the a divalent metal cation site. The Proton donor role is filled by H111. 113 to 115 contacts substrate; the sequence is NVR. A divalent metal cation contacts are provided by H150 and H180. Positions 245-280 are important for dimerization; that stretch reads YVEFNLVWDRGTHFGLQSGGRTESILLSMPPLASWA. Residue 263–265 participates in substrate binding; that stretch reads GGR.

This sequence belongs to the aerobic coproporphyrinogen-III oxidase family. Homodimer. A divalent metal cation is required as a cofactor.

The protein localises to the cytoplasm. The enzyme catalyses coproporphyrinogen III + O2 + 2 H(+) = protoporphyrinogen IX + 2 CO2 + 2 H2O. It participates in porphyrin-containing compound metabolism; protoporphyrin-IX biosynthesis; protoporphyrinogen-IX from coproporphyrinogen-III (O2 route): step 1/1. In terms of biological role, involved in the heme biosynthesis. Catalyzes the aerobic oxidative decarboxylation of propionate groups of rings A and B of coproporphyrinogen-III to yield the vinyl groups in protoporphyrinogen-IX. This chain is Oxygen-dependent coproporphyrinogen-III oxidase, found in Variovorax paradoxus (strain S110).